Consider the following 141-residue polypeptide: Large ribosomal subunit protein uL11 (141 aa).

The protein belongs to the universal ribosomal protein uL11 family. In terms of assembly, part of the ribosomal stalk of the 50S ribosomal subunit. Interacts with L10 and the large rRNA to form the base of the stalk. L10 forms an elongated spine to which L12 dimers bind in a sequential fashion forming a multimeric L10(L12)X complex. Post-translationally, one or more lysine residues are methylated.

In terms of biological role, forms part of the ribosomal stalk which helps the ribosome interact with GTP-bound translation factors. The protein is Large ribosomal subunit protein uL11 of Geobacillus sp. (strain WCH70).